The chain runs to 251 residues: Hydroxyacylglutathione hydrolase (251 aa).

The Zn(2+) site is built by histidine 53, histidine 55, aspartate 57, histidine 58, histidine 110, aspartate 127, and histidine 165.

The protein belongs to the metallo-beta-lactamase superfamily. Glyoxalase II family. Monomer. Zn(2+) serves as cofactor.

It catalyses the reaction an S-(2-hydroxyacyl)glutathione + H2O = a 2-hydroxy carboxylate + glutathione + H(+). It functions in the pathway secondary metabolite metabolism; methylglyoxal degradation; (R)-lactate from methylglyoxal: step 2/2. In terms of biological role, thiolesterase that catalyzes the hydrolysis of S-D-lactoyl-glutathione to form glutathione and D-lactic acid. This chain is Hydroxyacylglutathione hydrolase, found in Cronobacter sakazakii (strain ATCC BAA-894) (Enterobacter sakazakii).